Here is a 294-residue protein sequence, read N- to C-terminus: MTFFGQILTAMVTPFTDTGDMNFSVAEALAIHLADHGTDTLLLCGTTGESPTLTWQEEYELFQVVRKAVASKAKVMAGTGSNSTREAIEATQQAAKLGLDGALLVVPYYNKPPQEGLYEHFRAIAESVPDFPLMLYNIPGRTGQNLEADTVARLAEIGNIVAIKEASGNLDQVSQIRRLTPPEFSIYSGDDSLTLPYLSVGAAGVVSVASHLVGELLQKMVTAFASGEPQVATEIHLKLLPLCKALFATTNPIPVKAALQLQGWQVGSTRLPLPEAPDPIIQKLKNTLTDLALL.

Residue T47 participates in pyruvate binding. The active-site Proton donor/acceptor is Y136. K164 (schiff-base intermediate with substrate) is an active-site residue. V206 is a pyruvate binding site.

This sequence belongs to the DapA family. As to quaternary structure, homotetramer; dimer of dimers.

It localises to the cytoplasm. The catalysed reaction is L-aspartate 4-semialdehyde + pyruvate = (2S,4S)-4-hydroxy-2,3,4,5-tetrahydrodipicolinate + H2O + H(+). The protein operates within amino-acid biosynthesis; L-lysine biosynthesis via DAP pathway; (S)-tetrahydrodipicolinate from L-aspartate: step 3/4. In terms of biological role, catalyzes the condensation of (S)-aspartate-beta-semialdehyde [(S)-ASA] and pyruvate to 4-hydroxy-tetrahydrodipicolinate (HTPA). The sequence is that of 4-hydroxy-tetrahydrodipicolinate synthase from Acaryochloris marina (strain MBIC 11017).